The primary structure comprises 189 residues: dTTP/UTP pyrophosphatase (189 aa).

Residue Asp70 is the Proton acceptor of the active site.

Belongs to the Maf family. YhdE subfamily. It depends on a divalent metal cation as a cofactor.

Its subcellular location is the cytoplasm. The catalysed reaction is dTTP + H2O = dTMP + diphosphate + H(+). It catalyses the reaction UTP + H2O = UMP + diphosphate + H(+). In terms of biological role, nucleoside triphosphate pyrophosphatase that hydrolyzes dTTP and UTP. May have a dual role in cell division arrest and in preventing the incorporation of modified nucleotides into cellular nucleic acids. This Akkermansia muciniphila (strain ATCC BAA-835 / DSM 22959 / JCM 33894 / BCRC 81048 / CCUG 64013 / CIP 107961 / Muc) protein is dTTP/UTP pyrophosphatase.